The primary structure comprises 615 residues: Angiotensin-converting enzyme (615 aa).

The signal sequence occupies residues 1 to 17 (MRLFLLALLATLAVTQA). In terms of domain architecture, Peptidase M2 spans 19-607 (VKEEIQAKEY…IKNNVHIGWT (589 aa)). Asn53 carries an N-linked (GlcNAc...) asparagine glycan. A disulfide bridge links Cys133 with Cys141. 2 N-linked (GlcNAc...) asparagine glycosylation sites follow: Asn196 and Asn311. Cys336 and Cys354 form a disulfide bridge. His367 is a binding site for Zn(2+). Glu368 functions as the Proton acceptor in the catalytic mechanism. Residues His371 and Glu395 each coordinate Zn(2+). His497 acts as the Proton donor in catalysis. A disulfide bridge links Cys522 with Cys540.

This sequence belongs to the peptidase M2 family. Requires Zn(2+) as cofactor. In terms of processing, glycosylated. As to expression, expressed in vesicular structures in spermatocytes and early spermatids (at protein level).

The protein resides in the secreted. It is found in the extracellular space. It carries out the reaction Release of a C-terminal dipeptide, oligopeptide-|-Xaa-Yaa, when Xaa is not Pro, and Yaa is neither Asp nor Glu. Thus, conversion of angiotensin I to angiotensin II, with increase in vasoconstrictor activity, but no action on angiotensin II.. Inhibited by captopril and, to a lesser extent, by lisinopril, trandolaprilat, fosinoprilat and enalaprilat. In terms of biological role, may be involved in the specific maturation or degradation of a number of bioactive peptides. May play a role in the contractions of the heart, gut and testes, and in spermatid differentiation. The sequence is that of Angiotensin-converting enzyme (Ance) from Drosophila melanogaster (Fruit fly).